The sequence spans 2894 residues: Bifunctional DNA-directed RNA polymerase subunit beta-beta' (2894 aa).

Positions 1 to 1378 are DNA-directed RNA polymerase subunit beta; that stretch reads MANFTKLKNR…DVNIYGDEQD (1378 aa). The DNA-directed RNA polymerase subunit beta' stretch occupies residues 1385–2894; the sequence is PIAIKEDERP…QEEYEEDEEE (1510 aa). Zn(2+) is bound by residues Cys-1450, Cys-1452, Cys-1465, and Cys-1468. Mg(2+) contacts are provided by Asp-1849, Asp-1851, and Asp-1853. Residues Cys-2179, Cys-2253, Cys-2260, and Cys-2263 each contribute to the Zn(2+) site.

It in the N-terminal section; belongs to the RNA polymerase beta chain family. The protein in the C-terminal section; belongs to the RNA polymerase beta' chain family. As to quaternary structure, the RNAP catalytic core consists of 2 alpha, 1 beta/beta' and 1 omega subunit. When a sigma factor is associated with the core the holoenzyme is formed, which can initiate transcription. It depends on Mg(2+) as a cofactor. Zn(2+) is required as a cofactor.

It carries out the reaction RNA(n) + a ribonucleoside 5'-triphosphate = RNA(n+1) + diphosphate. In terms of biological role, DNA-dependent RNA polymerase catalyzes the transcription of DNA into RNA using the four ribonucleoside triphosphates as substrates. The polypeptide is Bifunctional DNA-directed RNA polymerase subunit beta-beta' (rpoBC) (Helicobacter hepaticus (strain ATCC 51449 / 3B1)).